Consider the following 438-residue polypeptide: ATP-dependent RNA helicase SUB2 (438 aa).

Positions 1-19 (MSHEGEEDLLEYSDNEQEI) are enriched in acidic residues. Residues 1-44 (MSHEGEEDLLEYSDNEQEIQVDNTKATEVAGNGEEAADGKDGDK) are disordered. The Q motif motif lies at 54–82 (TGFKDFLLKPELSRAIIDCGFEHPSEVQQ). One can recognise a Helicase ATP-binding domain in the interval 85–260 (IPQSIHGTDV…RRFLQNPLEI (176 aa)). Position 98-105 (98-105 (AKSGLGKT)) interacts with ATP. A DECD box motif is present at residues 207-210 (DECD). Residues 272–433 (GLQQYYIRLE…EFPEEGVDPS (162 aa)) form the Helicase C-terminal domain.

It belongs to the DEAD box helicase family. DECD subfamily.

It localises to the nucleus. It catalyses the reaction ATP + H2O = ADP + phosphate + H(+). In terms of biological role, ATP-binding RNA helicase involved in transcription elongation and required for the export of mRNA out of the nucleus. SUB2 also plays a role in pre-mRNA splicing and spliceosome assembly. May be involved in rDNA and telomeric silencing, and maintenance of genome integrity. This chain is ATP-dependent RNA helicase SUB2 (SUB2), found in Eremothecium gossypii (strain ATCC 10895 / CBS 109.51 / FGSC 9923 / NRRL Y-1056) (Yeast).